Reading from the N-terminus, the 197-residue chain is MEECLHNMMLLHNPLTHELNIKNLYICTMCGFSHVCNEESSNCKILETSEGVVCLYTGLTHLERFPCIINICPNDSDHDTIDIDYMNTVQSILRRVFVFFKTYEFKYVHVTNEIFTENEFKPHVLTAVITTFRRVFTSQKLIDKVSIFTISKLFIQLLIGKYAKQTTYDTNVIKVSKRKREDTLLKQMRYEYGNSSL.

This sequence belongs to the herpesviridae UL92 family.

The protein is Protein U63 of Elephas maximus (Indian elephant).